Here is a 460-residue protein sequence, read N- to C-terminus: Keratin, type I cytoskeletal 27 (460 aa).

The tract at residues 1 to 83 (MSVRFSSASR…GNEHGLLSGN (83 aa)) is head. The coil 1A stretch occupies residues 84–119 (EKVTMQNLNDRLASYLDNVRALEEANADLEQKIKGW). The IF rod domain occupies 84–399 (EKVTMQNLND…RLIDGEDGSC (316 aa)). The linker 1 stretch occupies residues 120–141 (YEKFGPGSCRGLDHDYSRYFTV). Positions 142 to 233 (IDDLRNQIIS…KNHEEEMKAL (92 aa)) are coil 1B. Residues 234-256 (QCAAGGNVNVEMNAAPGVDLTVL) form a linker 12 region. A coil 2 region spans residues 257–395 (LNNMRAEYEA…ETYCRLIDGE (139 aa)). The tail stretch occupies residues 396-460 (DGSCTKSKGY…NMKSEQRVPS (65 aa)). Residues 429-460 (DPRGKVPSSRVHTVEEKSTKVNNMKSEQRVPS) form a disordered region. Residues 448-460 (KVNNMKSEQRVPS) show a composition bias toward polar residues.

The protein belongs to the intermediate filament family. Heterotetramer of two type I and two type II keratins. Interacts with KRT6A to form filaments.

It localises to the cytoplasm. Essential for the proper assembly of type I and type II keratin protein complexes and formation of keratin intermediate filaments in the inner root sheath (irs). This chain is Keratin, type I cytoskeletal 27, found in Capra hircus (Goat).